We begin with the raw amino-acid sequence, 322 residues long: Phosphatidylserine decarboxylase proenzyme (322 aa).

Residues Asp90, His147, and Ser254 each act as charge relay system; for autoendoproteolytic cleavage activity in the active site. The active-site Schiff-base intermediate with substrate; via pyruvic acid; for decarboxylase activity is the Ser254. Ser254 carries the pyruvic acid (Ser); by autocatalysis modification. The interval 293–322 (PDAEPAPLPAEEIEAEHDASPLVDDKKDQV) is disordered. Basic and acidic residues predominate over residues 308–322 (EHDASPLVDDKKDQV).

This sequence belongs to the phosphatidylserine decarboxylase family. PSD-B subfamily. Prokaryotic type I sub-subfamily. Heterodimer of a large membrane-associated beta subunit and a small pyruvoyl-containing alpha subunit. Pyruvate is required as a cofactor. Is synthesized initially as an inactive proenzyme. Formation of the active enzyme involves a self-maturation process in which the active site pyruvoyl group is generated from an internal serine residue via an autocatalytic post-translational modification. Two non-identical subunits are generated from the proenzyme in this reaction, and the pyruvate is formed at the N-terminus of the alpha chain, which is derived from the carboxyl end of the proenzyme. The autoendoproteolytic cleavage occurs by a canonical serine protease mechanism, in which the side chain hydroxyl group of the serine supplies its oxygen atom to form the C-terminus of the beta chain, while the remainder of the serine residue undergoes an oxidative deamination to produce ammonia and the pyruvoyl prosthetic group on the alpha chain. During this reaction, the Ser that is part of the protease active site of the proenzyme becomes the pyruvoyl prosthetic group, which constitutes an essential element of the active site of the mature decarboxylase.

The protein resides in the cell membrane. It carries out the reaction a 1,2-diacyl-sn-glycero-3-phospho-L-serine + H(+) = a 1,2-diacyl-sn-glycero-3-phosphoethanolamine + CO2. Its pathway is phospholipid metabolism; phosphatidylethanolamine biosynthesis; phosphatidylethanolamine from CDP-diacylglycerol: step 2/2. Its function is as follows. Catalyzes the formation of phosphatidylethanolamine (PtdEtn) from phosphatidylserine (PtdSer). This is Phosphatidylserine decarboxylase proenzyme from Escherichia coli O9:H4 (strain HS).